Here is a 438-residue protein sequence, read N- to C-terminus: Adenylyltransferase and sulfurtransferase MOCS3 (438 aa).

Residues G80, D101, 108–112 (TNLHR), K125, and 169–170 (DN) each bind ATP. The Zn(2+) site is built by C210 and C213. C227 serves as the catalytic Glycyl thioester intermediate; for adenylyltransferase activity. Residues C285 and C288 each coordinate Zn(2+). One can recognise a Rhodanese domain in the interval 335–436 (SKQRHVLVDV…WTRNVDKEFP (102 aa)). C392 serves as the catalytic Cysteine persulfide intermediate; for sulfurtransferase activity.

The protein in the N-terminal section; belongs to the HesA/MoeB/ThiF family. UBA4 subfamily. It depends on Zn(2+) as a cofactor.

It is found in the cytoplasm. It localises to the cytosol. The catalysed reaction is [molybdopterin-synthase sulfur-carrier protein]-C-terminal Gly-Gly + ATP + H(+) = [molybdopterin-synthase sulfur-carrier protein]-C-terminal Gly-Gly-AMP + diphosphate. It carries out the reaction [molybdopterin-synthase sulfur-carrier protein]-C-terminal Gly-Gly-AMP + S-sulfanyl-L-cysteinyl-[cysteine desulfurase] + AH2 = [molybdopterin-synthase sulfur-carrier protein]-C-terminal-Gly-aminoethanethioate + L-cysteinyl-[cysteine desulfurase] + A + AMP + 2 H(+). It participates in tRNA modification; 5-methoxycarbonylmethyl-2-thiouridine-tRNA biosynthesis. Its pathway is cofactor biosynthesis; molybdopterin biosynthesis. In terms of biological role, plays a central role in 2-thiolation of mcm(5)S(2)U at tRNA wobble positions of cytosolic tRNA(Lys), tRNA(Glu) and tRNA(Gln). Also essential during biosynthesis of the molybdenum cofactor. Acts by mediating the C-terminal thiocarboxylation of sulfur carriers URM1 and MOCS2A. Its N-terminus first activates URM1 and MOCS2A as acyl-adenylates (-COAMP), then the persulfide sulfur on the catalytic cysteine is transferred to URM1 and MOCS2A to form thiocarboxylation (-COSH) of their C-terminus. The reaction probably involves hydrogen sulfide that is generated from the persulfide intermediate and that acts as a nucleophile towards URM1 and MOCS2A. Subsequently, a transient disulfide bond is formed. Does not use thiosulfate as sulfur donor; NFS1 probably acting as a sulfur donor for thiocarboxylation reactions. This is Adenylyltransferase and sulfurtransferase MOCS3 from Culex quinquefasciatus (Southern house mosquito).